Here is a 175-residue protein sequence, read N- to C-terminus: CDP-archaeol synthase (175 aa).

4 helical membrane passes run glycine 41 to serine 61, leucine 82 to phenylalanine 102, phenylalanine 122 to phenylalanine 142, and valine 150 to valine 170.

Belongs to the CDP-archaeol synthase family. Mg(2+) serves as cofactor.

Its subcellular location is the cell membrane. The catalysed reaction is 2,3-bis-O-(geranylgeranyl)-sn-glycerol 1-phosphate + CTP + H(+) = CDP-2,3-bis-O-(geranylgeranyl)-sn-glycerol + diphosphate. It participates in membrane lipid metabolism; glycerophospholipid metabolism. In terms of biological role, catalyzes the formation of CDP-2,3-bis-(O-geranylgeranyl)-sn-glycerol (CDP-archaeol) from 2,3-bis-(O-geranylgeranyl)-sn-glycerol 1-phosphate (DGGGP) and CTP. This reaction is the third ether-bond-formation step in the biosynthesis of archaeal membrane lipids. The sequence is that of CDP-archaeol synthase from Methanosarcina barkeri (strain Fusaro / DSM 804).